The chain runs to 50 residues: Protein hunchback (50 aa).

C2H2-type zinc fingers lie at residues 1-5, 11-33, and 39-50; these read HLRNH, FKCN…MKSH, and YRCADCTYATKY.

Belongs to the hunchback C2H2-type zinc-finger protein family.

It is found in the nucleus. Its function is as follows. Gap class segmentation protein that controls development of head structures. In Platynereis dumerilii (Dumeril's clam worm), this protein is Protein hunchback (hb).